The following is a 542-amino-acid chain: 2,3-bisphosphoglycerate-independent phosphoglycerate mutase (542 aa).

Mn(2+) contacts are provided by Asp24 and Ser74. The active-site Phosphoserine intermediate is Ser74. Residues His135, 165–166, Arg197, Arg203, 268–271, and Lys341 each bind substrate; these read RD and RPDR. Mn(2+) contacts are provided by Asp408, His412, Asp449, His450, and His467.

Belongs to the BPG-independent phosphoglycerate mutase family. In terms of assembly, monomer. Mn(2+) is required as a cofactor.

The catalysed reaction is (2R)-2-phosphoglycerate = (2R)-3-phosphoglycerate. Its pathway is carbohydrate degradation; glycolysis; pyruvate from D-glyceraldehyde 3-phosphate: step 3/5. In terms of biological role, catalyzes the interconversion of 2-phosphoglycerate and 3-phosphoglycerate. The chain is 2,3-bisphosphoglycerate-independent phosphoglycerate mutase from Prochlorococcus marinus (strain NATL1A).